A 464-amino-acid polypeptide reads, in one-letter code: uncharacterized protein (464 aa).

An N-terminal signal peptide occupies residues 1-24 (MSRFVPRIIPFYLLLLVAGGTANA).

Belongs to the intimin/invasin family.

It localises to the periplasm. This is an uncharacterized protein from Escherichia coli (strain K12).